The chain runs to 25 residues: Xenoposin precursor fragment BM3 (25 aa).

As to expression, expressed by the skin glands.

The protein resides in the secreted. In terms of biological role, antimicrobial peptide. In Xenopus boumbaensis (Mawa clawed frog), this protein is Xenoposin precursor fragment BM3.